A 407-amino-acid chain; its full sequence is Large ribosomal subunit protein uL3-like (407 aa).

Residues 1–31 (MSHRKFSAPRHGHLGFLPHKRSRRHRGKVKS) show a composition bias toward basic residues. Residues 1-37 (MSHRKFSAPRHGHLGFLPHKRSRRHRGKVKSWPRDDP) form a disordered region.

It belongs to the universal ribosomal protein uL3 family. As to quaternary structure, component of the large ribosomal subunit (LSU). Part of a LSU subcomplex, the 5S RNP which is composed of the 5S RNA, RPL5 and RPL11. Interacts with NVL in an ATP-dependent manner. Interacts with RRP1B. Interacts with IPO5, IPO7 and KPNB1; these interactions may be involved in RPL5 nuclear import for the assembly of ribosomal subunits. Interacts with RRP1B. Expression is restricted to striated muscles.

Heart- and skeletal muscle-specific component of the ribosome, which regulates muscle function. Component of the large ribosomal subunit in striated muscle cells: replaces the RPL3 paralog in the ribosome in these cells. The ribosome is a large ribonucleoprotein complex responsible for the synthesis of proteins in the cell. Inhibits myotube growth and muscle function. The chain is Large ribosomal subunit protein uL3-like from Mus musculus (Mouse).